The primary structure comprises 158 residues: uncharacterized protein (158 aa).

Residues 1-21 (MPHTGSQHTLQATPKTAQHTG) show a composition bias toward polar residues. Disordered stretches follow at residues 1-89 (MPHT…RVEG) and 107-158 (EEEK…DAKT). Basic and acidic residues-rich tracts occupy residues 51-68 (HTEGCHTQKTRMSADKAG) and 107-127 (EEEKASGEARGEDVGSSRESR). Positions 128 to 137 (QGTAHKSTCM) are enriched in polar residues. A compositionally biased stretch (basic and acidic residues) spans 149-158 (EIGKVEDAKT).

This is an uncharacterized protein from Encephalitozoon cuniculi (strain GB-M1) (Microsporidian parasite).